The chain runs to 519 residues: ATP synthase subunit alpha 1 (519 aa).

172-179 (GDRQTGKT) contacts ATP.

It belongs to the ATPase alpha/beta chains family. As to quaternary structure, F-type ATPases have 2 components, CF(1) - the catalytic core - and CF(0) - the membrane proton channel. CF(1) has five subunits: alpha(3), beta(3), gamma(1), delta(1), epsilon(1). CF(0) has three main subunits: a(1), b(2) and c(9-12). The alpha and beta chains form an alternating ring which encloses part of the gamma chain. CF(1) is attached to CF(0) by a central stalk formed by the gamma and epsilon chains, while a peripheral stalk is formed by the delta and b chains.

It localises to the cell inner membrane. It catalyses the reaction ATP + H2O + 4 H(+)(in) = ADP + phosphate + 5 H(+)(out). Its function is as follows. Produces ATP from ADP in the presence of a proton gradient across the membrane. The alpha chain is a regulatory subunit. This is ATP synthase subunit alpha 1 from Psychromonas ingrahamii (strain DSM 17664 / CCUG 51855 / 37).